A 183-amino-acid chain; its full sequence is Large ribosomal subunit protein uL10 (183 aa).

It belongs to the universal ribosomal protein uL10 family. As to quaternary structure, part of the ribosomal stalk of the 50S ribosomal subunit. The N-terminus interacts with L11 and the large rRNA to form the base of the stalk. The C-terminus forms an elongated spine to which L12 dimers bind in a sequential fashion forming a multimeric L10(L12)X complex.

Its function is as follows. Forms part of the ribosomal stalk, playing a central role in the interaction of the ribosome with GTP-bound translation factors. The polypeptide is Large ribosomal subunit protein uL10 (Mesomycoplasma hyopneumoniae (strain 232) (Mycoplasma hyopneumoniae)).